We begin with the raw amino-acid sequence, 378 residues long: S-(hydroxymethyl)glutathione dehydrogenase (378 aa).

Zn(2+)-binding residues include C49, H71, C101, C104, C107, C115, and C178.

Belongs to the zinc-containing alcohol dehydrogenase family. Class-III subfamily. As to quaternary structure, homodimer. Zn(2+) serves as cofactor.

The protein resides in the cytoplasm. It catalyses the reaction S-(hydroxymethyl)glutathione + NADP(+) = S-formylglutathione + NADPH + H(+). The catalysed reaction is S-(hydroxymethyl)glutathione + NAD(+) = S-formylglutathione + NADH + H(+). The enzyme catalyses a primary alcohol + NAD(+) = an aldehyde + NADH + H(+). It carries out the reaction a secondary alcohol + NAD(+) = a ketone + NADH + H(+). It catalyses the reaction S-nitrosoglutathione + NADH + H(+) = S-(hydroxysulfenamide)glutathione + NAD(+). Has high formaldehyde dehydrogenase activity in the presence of glutathione and catalyzes the oxidation of normal alcohols in a reaction that is not GSH-dependent. In addition, hemithiolacetals other than those formed from GSH, including omega-thiol fatty acids, also are substrates. Also acts as a S-nitroso-glutathione reductase by catalyzing the NADH-dependent reduction of S-nitrosoglutathione. The chain is S-(hydroxymethyl)glutathione dehydrogenase (frmA) from Haemophilus influenzae (strain ATCC 51907 / DSM 11121 / KW20 / Rd).